A 37-amino-acid polypeptide reads, in one-letter code: Large ribosomal subunit protein bL36 (37 aa).

The protein belongs to the bacterial ribosomal protein bL36 family.

The protein is Large ribosomal subunit protein bL36 of Staphylococcus epidermidis (strain ATCC 35984 / DSM 28319 / BCRC 17069 / CCUG 31568 / BM 3577 / RP62A).